The sequence spans 244 residues: 5-oxoprolinase subunit A (244 aa).

It belongs to the LamB/PxpA family. In terms of assembly, forms a complex composed of PxpA, PxpB and PxpC.

It catalyses the reaction 5-oxo-L-proline + ATP + 2 H2O = L-glutamate + ADP + phosphate + H(+). Its function is as follows. Catalyzes the cleavage of 5-oxoproline to form L-glutamate coupled to the hydrolysis of ATP to ADP and inorganic phosphate. In Salmonella agona (strain SL483), this protein is 5-oxoprolinase subunit A.